We begin with the raw amino-acid sequence, 265 residues long: Reduced viability upon starvation protein 161 (265 aa).

The BAR domain occupies 15–239; the sequence is HSVIIKNVDK…LDQQSRDDYA (225 aa). Residues 126–193 adopt a coiled-coil conformation; the sequence is YFKEIEEAIK…NQLKTELPQL (68 aa).

It is found in the cytoplasm. It localises to the cytoskeleton. Functionally, component of a cytoskeletal structure that is required for the formation of endocytic vesicles at the plasma membrane level. The polypeptide is Reduced viability upon starvation protein 161 (RVS161) (Saccharomyces cerevisiae (strain ATCC 204508 / S288c) (Baker's yeast)).